The sequence spans 92 residues: Large ribosomal subunit protein bL25 (92 aa).

It belongs to the bacterial ribosomal protein bL25 family. As to quaternary structure, part of the 50S ribosomal subunit; part of the 5S rRNA/L5/L18/L25 subcomplex. Contacts the 5S rRNA. Binds to the 5S rRNA independently of L5 and L18.

Its function is as follows. This is one of the proteins that binds to the 5S RNA in the ribosome where it forms part of the central protuberance. This chain is Large ribosomal subunit protein bL25, found in Photobacterium damsela subsp. piscicida (Pasteurella piscicida).